The chain runs to 78 residues: TP53-regulated inhibitor of apoptosis 1 (78 aa).

Residues 1-52 (MNSVGEECTDMKREYDQCFNRWFAEKFLKGECSGDPCTELFRRYRDCVQKAI) are a coiled coil. The 51-residue stretch at 5–55 (GEECTDMKREYDQCFNRWFAEKFLKGECSGDPCTELFRRYRDCVQKAIKDK) folds into the CHCH domain. 2 consecutive short sequence motifs (cx9C motif) follow at residues 8–18 (CTDMKREYDQC) and 37–47 (CTELFRRYRDC). 2 disulfides stabilise this stretch: cysteine 8–cysteine 47 and cysteine 18–cysteine 37.

It belongs to the TRIAP1/MDM35 family. Monomer. Forms a complex with prelid1 in the mitochondrion intermembrane space. Interacts with prelid3a. In terms of tissue distribution, expressed in the developing pronephros.

Its subcellular location is the mitochondrion. The protein localises to the mitochondrion intermembrane space. It carries out the reaction a 1,2-diacyl-sn-glycero-3-phosphate(in) = a 1,2-diacyl-sn-glycero-3-phosphate(out). Its function is as follows. Involved in the modulation of the mitochondrial apoptotic pathway by ensuring the accumulation of cardiolipin (CL) in mitochondrial membranes. The triap1:prelid1 complex probably functions as a phosphatidic acid (PA) transporter across the mitochondrion intermembrane space to provide PA for cardiolipin CL synthesis in the inner membrane. Likewise, the triap1:prelid3a complex mediates the transfer of phosphatidic acid (PA) between liposomes (in vitro) and probably functions as a PA transporter across the mitochondrion intermembrane space (in vivo). Mediates cell survival by inhibiting activation of caspase-9 which prevents induction of apoptosis. Required for pronephros development; probably involved at an early stage in the formation of pronephric components derived from the somatic layer. This Xenopus tropicalis (Western clawed frog) protein is TP53-regulated inhibitor of apoptosis 1.